A 159-amino-acid polypeptide reads, in one-letter code: Small ribosomal subunit protein uS9 (159 aa).

The protein belongs to the universal ribosomal protein uS9 family.

The protein is Small ribosomal subunit protein uS9 of Methylocella silvestris (strain DSM 15510 / CIP 108128 / LMG 27833 / NCIMB 13906 / BL2).